The primary structure comprises 142 residues: Pro-vaccinia growth factor (142 aa).

The signal sequence occupies residues 1–18 (MSMKYLMLLFAAMIIRSF). Residues 19 to 100 (ADSGNAIETT…SENPNTTTSY (82 aa)) lie on the Extracellular side of the membrane. An N-linked (GlcNAc...) asparagine; by host glycan is attached at N34. One can recognise an EGF-like domain in the interval 41-81 (AIRLCGPEGDGYCLHGDCIHARDIDGMYCRCSHGYTGIRCQ). 3 disulfide bridges follow: C45-C58, C53-C69, and C71-C80. N-linked (GlcNAc...) asparagine; by host glycosylation is present at N95. A helical membrane pass occupies residues 101 to 121 (IPSPGIMLVLVGIIIIITCCL). The Cytoplasmic portion of the chain corresponds to 122 to 142 (LSVYRFTRRTNKLPLQDMVVP).

It belongs to the orthopoxvirus OPG019 family. Vaccinia growth factor interacts with host EGFR and promotes EGFR dimerization.

Its subcellular location is the host membrane. The protein resides in the secreted. Stimulates cellular proliferation (hyperplasia)and mobility around infected cells to promote rapid and efficient spread of infection. This effect is beneficial for virus replication in vivo, because poxviruses replicate possibly better in proliferating cells than in quiescent cells. Acts by binding host EGFR, inducing its dimerization, autophosphorylation and leading to activation of several cellular pathways regulating cell proliferation or cell survival. The activation by host EGFR of mitogen activated protein kinases (MAPK) and extracellular-signal regulated kinases (ERK) are essential for the positive effect of vaccinia growth factor on poxvirus virulence in vivo. This Vaccinia virus (strain Copenhagen) (VACV) protein is Pro-vaccinia growth factor (OPG019).